Reading from the N-terminus, the 480-residue chain is Glycogen synthase (480 aa).

ADP-alpha-D-glucose is bound at residue K15.

The protein belongs to the glycosyltransferase 1 family. Bacterial/plant glycogen synthase subfamily.

It carries out the reaction [(1-&gt;4)-alpha-D-glucosyl](n) + ADP-alpha-D-glucose = [(1-&gt;4)-alpha-D-glucosyl](n+1) + ADP + H(+). It participates in glycan biosynthesis; glycogen biosynthesis. Its function is as follows. Synthesizes alpha-1,4-glucan chains using ADP-glucose. This is Glycogen synthase from Rhizobium johnstonii (strain DSM 114642 / LMG 32736 / 3841) (Rhizobium leguminosarum bv. viciae).